The primary structure comprises 579 residues: Solute carrier family 15 member 5 (579 aa).

11 helical membrane-spanning segments follow: residues 77–97 (CQAA…PVFV), 110–130 (LVYI…VVAF), 154–174 (LFYV…AIVC), 191–211 (SFFN…FLGI), 221–241 (ALVL…LHMI), 304–324 (TFFL…MCIM), 343–363 (GFLL…LILA), 386–406 (CIIA…FFEI), 422–442 (VLTV…LLGV), 472–492 (TLFN…VYLI), and 509–529 (SFFF…CSVS).

This sequence belongs to the major facilitator superfamily. Proton-dependent oligopeptide transporter (POT/PTR) (TC 2.A.17) family.

The protein resides in the membrane. Functionally, proton oligopeptide cotransporter. The polypeptide is Solute carrier family 15 member 5 (SLC15A5) (Homo sapiens (Human)).